We begin with the raw amino-acid sequence, 369 residues long: 3-dehydroquinate synthase (369 aa).

Residues 75-80, 109-113, 133-134, K146, K155, and 173-176 each bind NAD(+); these read DGEEHK, GVIGD, TT, and TLKT. 3 residues coordinate Zn(2+): E188, H251, and H268.

It belongs to the sugar phosphate cyclases superfamily. Dehydroquinate synthase family. Co(2+) is required as a cofactor. It depends on Zn(2+) as a cofactor. The cofactor is NAD(+).

The protein resides in the cytoplasm. The catalysed reaction is 7-phospho-2-dehydro-3-deoxy-D-arabino-heptonate = 3-dehydroquinate + phosphate. Its pathway is metabolic intermediate biosynthesis; chorismate biosynthesis; chorismate from D-erythrose 4-phosphate and phosphoenolpyruvate: step 2/7. In terms of biological role, catalyzes the conversion of 3-deoxy-D-arabino-heptulosonate 7-phosphate (DAHP) to dehydroquinate (DHQ). The polypeptide is 3-dehydroquinate synthase (Legionella pneumophila (strain Corby)).